Consider the following 158-residue polypeptide: CD-NTase/cGAS isopeptidase (158 aa).

E38 functions as the Proton donor/acceptor in the catalytic mechanism. Positions 100, 102, and 113 each coordinate Zn(2+).

The protein belongs to the peptidase M67B family. Cap3 isopeptidase subfamily.

Functionally, metalloprotease priming reversal component of a CBASS antivirus system. CBASS (cyclic oligonucleotide-based antiphage signaling system) provides immunity against bacteriophages. The CD-NTase protein synthesizes cyclic nucleotides in response to infection; these serve as specific second messenger signals. The signals activate a diverse range of effectors, leading to bacterial cell death and thus abortive phage infection. A type II-A(GA) CBASS system. In terms of biological role, reverses the primed state of CdnA, the CD-NTase. Its function is as follows. The capV-cdnA-cap2-cap3 operon provides about 10(4)-fold protection in strain BWHPSA011 against infection by phage PaMx41. In P.aeruginosa strain PAO1 it confers protection against phages PaMx41 and JBD18 but not JBD67 (JBD18 and JBD67 do not replicate in BWHPSA011 / Pa011). When acb2 in JBD67 is deleted this CBASS operon then protects against JDB67 also. This CBASS system limits prophage induction of lysogenized JBD67 as well as viral lytic replication. The chain is CD-NTase/cGAS isopeptidase from Pseudomonas aeruginosa (strain BWHPSA011 / Pa011).